A 130-amino-acid chain; its full sequence is Fumarate reductase subunit C (130 aa).

The next 3 membrane-spanning stretches (helical) occupy residues 37–57 (VWFS…PAGW), 60–80 (FVGF…LLAA), and 109–129 (VIKA…AVAL).

The protein belongs to the FrdC family. Part of an enzyme complex containing four subunits: a flavoprotein (FrdA), an iron-sulfur protein (FrdB), and two hydrophobic anchor proteins (FrdC and FrdD).

The protein localises to the cell inner membrane. In terms of biological role, two distinct, membrane-bound, FAD-containing enzymes are responsible for the catalysis of fumarate and succinate interconversion; fumarate reductase is used in anaerobic growth, and succinate dehydrogenase is used in aerobic growth. Anchors the catalytic components of the fumarate reductase complex to the cell inner membrane, binds quinones. The protein is Fumarate reductase subunit C of Yersinia enterocolitica serotype O:8 / biotype 1B (strain NCTC 13174 / 8081).